The following is a 229-amino-acid chain: Growth factor receptor-bound protein 2 (229 aa).

SH3 domains follow at residues 1–58 and 168–227; these read MEAV…MKPH and QQPT…PVNR. In terms of domain architecture, SH2 spans 60–171; it reads WFFGKIPRAK…RATNLLQQPT (112 aa).

Its subcellular location is the nucleus. The protein localises to the cytoplasm. It is found in the endosome. It localises to the golgi apparatus. Adapter protein that provides a critical link between cell surface growth factor receptors and the Ras signaling pathway. Promotes meiotic reinitiation during oocyte maturation. This is Growth factor receptor-bound protein 2 from Xenopus tropicalis (Western clawed frog).